The chain runs to 270 residues: Shikimate dehydrogenase (NADP(+)) (270 aa).

Residues Ser-15–Ser-17 and Thr-62 contribute to the shikimate site. The active-site Proton acceptor is the Lys-66. Shikimate is bound by residues Asn-87 and Asp-102. Residues Gly-127–Ala-131, Asn-151–Arg-156, and Met-214 contribute to the NADP(+) site. Tyr-216 lines the shikimate pocket. Gly-238 is an NADP(+) binding site.

It belongs to the shikimate dehydrogenase family. In terms of assembly, homodimer.

It carries out the reaction shikimate + NADP(+) = 3-dehydroshikimate + NADPH + H(+). It functions in the pathway metabolic intermediate biosynthesis; chorismate biosynthesis; chorismate from D-erythrose 4-phosphate and phosphoenolpyruvate: step 4/7. Functionally, involved in the biosynthesis of the chorismate, which leads to the biosynthesis of aromatic amino acids. Catalyzes the reversible NADPH linked reduction of 3-dehydroshikimate (DHSA) to yield shikimate (SA). This chain is Shikimate dehydrogenase (NADP(+)), found in Alkalilimnicola ehrlichii (strain ATCC BAA-1101 / DSM 17681 / MLHE-1).